Reading from the N-terminus, the 163-residue chain is Low molecular weight protein-tyrosine phosphatase A (163 aa).

The active-site Nucleophile is the cysteine 11. Arginine 17 is a catalytic residue. The active-site Proton donor is aspartate 126.

This sequence belongs to the low molecular weight phosphotyrosine protein phosphatase family.

The enzyme catalyses O-phospho-L-tyrosyl-[protein] + H2O = L-tyrosyl-[protein] + phosphate. Functionally, key virulence factor required for mycobacterial survival within host macrophages. Exhibits protein tyrosine phosphatase activity. In terms of biological role, supports mycobacteria survival during infection by modulation of the phagosome maturation and modulation of the normal host signaling pathways, including host innate immune responses and cell apoptosis. The protein is Low molecular weight protein-tyrosine phosphatase A (ptpA) of Mycobacterium bovis (strain ATCC BAA-935 / AF2122/97).